Consider the following 623-residue polypeptide: Chaperone protein HtpG (623 aa).

The a; substrate-binding stretch occupies residues 1–336; the sequence is MVSKQQTMGF…ASDLPLNISR (336 aa). The interval 337–550 is b; sequence EILQDNKQVE…EQDMGLEMQR (214 aa). Residues 551-623 are c; that stretch reads ILQAAGQQVP…NRVNRLLVSS (73 aa).

The protein belongs to the heat shock protein 90 family. As to quaternary structure, homodimer.

The protein localises to the cytoplasm. Its function is as follows. Molecular chaperone. Has ATPase activity. This is Chaperone protein HtpG from Legionella pneumophila (strain Paris).